Consider the following 736-residue polypeptide: ABC transporter G family member 16 (736 aa).

The 245-residue stretch at leucine 88 to glutamate 332 folds into the ABC transporter domain. An ATP-binding site is contributed by glycine 125–serine 132. Transmembrane regions (helical) follow at residues serine 410 to isoleucine 430, leucine 449 to tryptophan 469, phenylalanine 484 to leucine 504, valine 525 to valine 545, alanine 569 to methionine 589, leucine 590 to isoleucine 610, and leucine 709 to leucine 729. The 211-residue stretch at isoleucine 430 to phenylalanine 640 folds into the ABC transmembrane type-2 domain.

This sequence belongs to the ABC transporter superfamily. ABCG family. Eye pigment precursor importer (TC 3.A.1.204) subfamily.

It is found in the membrane. The sequence is that of ABC transporter G family member 16 (ABCG16) from Arabidopsis thaliana (Mouse-ear cress).